The chain runs to 221 residues: Urease accessory protein UreG (221 aa).

19-26 provides a ligand contact to GTP; the sequence is GPVGSGKT.

This sequence belongs to the SIMIBI class G3E GTPase family. UreG subfamily. Homodimer. UreD, UreF and UreG form a complex that acts as a GTP-hydrolysis-dependent molecular chaperone, activating the urease apoprotein by helping to assemble the nickel containing metallocenter of UreC. The UreE protein probably delivers the nickel.

Its subcellular location is the cytoplasm. Facilitates the functional incorporation of the urease nickel metallocenter. This process requires GTP hydrolysis, probably effectuated by UreG. This is Urease accessory protein UreG from Yersinia enterocolitica serotype O:8 / biotype 1B (strain NCTC 13174 / 8081).